The primary structure comprises 524 residues: Cytochrome P450 1A1 (524 aa).

Residues 33 to 44 (TRTWVPKGLKSP) are mitochondrial targeting signal. Residue S71 is glycosylated (O-linked (GlcNAc) serine). Substrate is bound at residue F228. Position 461 (C461) interacts with heme.

The protein belongs to the cytochrome P450 family. Both Cytochrome P450MT2A and Cytochrome P450MT2B interact with cytosolic chaperones HSP70 and HSP90; this interaction is required for initial targeting to mitochondria. P450MT2B interacts (via mitochondrial targeting signal) with TOMM40 (via N-terminus); this interaction is required for translocation across the mitochondrial outer membrane. Requires heme as cofactor. Two forms; MT2A (long form) and MT2B (short form); are produced by NH2-terminal proteolytic cleavage. This cleavage activates a cryptic mitochondrial targeting signal. As to expression, liver.

It is found in the cytoplasm. It localises to the endoplasmic reticulum membrane. The protein resides in the mitochondrion inner membrane. Its subcellular location is the microsome membrane. The enzyme catalyses an organic molecule + reduced [NADPH--hemoprotein reductase] + O2 = an alcohol + oxidized [NADPH--hemoprotein reductase] + H2O + H(+). It carries out the reaction estrone + reduced [NADPH--hemoprotein reductase] + O2 = 2-hydroxyestrone + oxidized [NADPH--hemoprotein reductase] + H2O + H(+). The catalysed reaction is estrone + reduced [NADPH--hemoprotein reductase] + O2 = 4-hydroxyestrone + oxidized [NADPH--hemoprotein reductase] + H2O + H(+). It catalyses the reaction estrone + reduced [NADPH--hemoprotein reductase] + O2 = 6alpha-hydroxyestrone + oxidized [NADPH--hemoprotein reductase] + H2O + H(+). The enzyme catalyses estrone + reduced [NADPH--hemoprotein reductase] + O2 = 15alpha-hydroxyestrone + oxidized [NADPH--hemoprotein reductase] + H2O + H(+). It carries out the reaction estrone + reduced [NADPH--hemoprotein reductase] + O2 = 16alpha-hydroxyestrone + oxidized [NADPH--hemoprotein reductase] + H2O + H(+). The catalysed reaction is 17beta-estradiol + reduced [NADPH--hemoprotein reductase] + O2 = 2-hydroxy-17beta-estradiol + oxidized [NADPH--hemoprotein reductase] + H2O + H(+). It catalyses the reaction 17beta-estradiol + reduced [NADPH--hemoprotein reductase] + O2 = 4-hydroxy-17beta-estradiol + oxidized [NADPH--hemoprotein reductase] + H2O + H(+). The enzyme catalyses 17beta-estradiol + reduced [NADPH--hemoprotein reductase] + O2 = 6alpha-hydroxy-17beta-estradiol + oxidized [NADPH--hemoprotein reductase] + H2O + H(+). It carries out the reaction 17beta-estradiol + reduced [NADPH--hemoprotein reductase] + O2 = 7alpha-hydroxy-17beta-estradiol + oxidized [NADPH--hemoprotein reductase] + H2O + H(+). The catalysed reaction is 17beta-estradiol + reduced [NADPH--hemoprotein reductase] + O2 = 15alpha-hydroxy-17beta-estradiol + oxidized [NADPH--hemoprotein reductase] + H2O + H(+). It catalyses the reaction (5Z,8Z,11Z)-eicosatrienoate + reduced [NADPH--hemoprotein reductase] + O2 = 19-hydroxy-(5Z,8Z,11Z)-eicosatrienoate + oxidized [NADPH--hemoprotein reductase] + H2O + H(+). The enzyme catalyses (5Z,8Z,11Z,14Z)-eicosatetraenoate + reduced [NADPH--hemoprotein reductase] + O2 = 16-hydroxy-(5Z,8Z,11Z,14Z)-eicosatetraenoate + oxidized [NADPH--hemoprotein reductase] + H2O + H(+). It carries out the reaction (5Z,8Z,11Z,14Z)-eicosatetraenoate + reduced [NADPH--hemoprotein reductase] + O2 = 17-hydroxy-(5Z,8Z,11Z,14Z)-eicosatetraenoate + oxidized [NADPH--hemoprotein reductase] + H2O + H(+). The catalysed reaction is (5Z,8Z,11Z,14Z)-eicosatetraenoate + reduced [NADPH--hemoprotein reductase] + O2 = 18-hydroxy-(5Z,8Z,11Z,14Z)-eicosatetraenoate + oxidized [NADPH--hemoprotein reductase] + H2O + H(+). It catalyses the reaction (5Z,8Z,11Z,14Z)-eicosatetraenoate + reduced [NADPH--hemoprotein reductase] + O2 = 19-hydroxy-(5Z,8Z,11Z,14Z)-eicosatetraenoate + oxidized [NADPH--hemoprotein reductase] + H2O + H(+). The enzyme catalyses (5Z,8Z,11Z,14Z,17Z)-eicosapentaenoate + reduced [NADPH--hemoprotein reductase] + O2 = 19-hydroxy-(5Z,8Z,11Z,14Z,17Z)-eicosapentaenoate + oxidized [NADPH--hemoprotein reductase] + H2O + H(+). It carries out the reaction (5Z,8Z,11Z,14Z)-eicosatetraenoate + reduced [NADPH--hemoprotein reductase] + O2 = (8R,9S)-epoxy-(5Z,11Z,14Z)-eicosatrienoate + oxidized [NADPH--hemoprotein reductase] + H2O + H(+). The catalysed reaction is (5Z,8Z,11Z,14Z)-eicosatetraenoate + reduced [NADPH--hemoprotein reductase] + O2 = (11R,12S)-epoxy-(5Z,8Z,14Z)-eicosatrienoate + oxidized [NADPH--hemoprotein reductase] + H2O + H(+). It catalyses the reaction (5Z,8Z,11Z,14Z)-eicosatetraenoate + reduced [NADPH--hemoprotein reductase] + O2 = (11S,12R)-epoxy-(5Z,8Z,14Z)-eicosatrienoate + oxidized [NADPH--hemoprotein reductase] + H2O + H(+). The enzyme catalyses (5Z,8Z,11Z,14Z)-eicosatetraenoate + reduced [NADPH--hemoprotein reductase] + O2 = (14R,15S)-epoxy-(5Z,8Z,11Z)-eicosatrienoate + oxidized [NADPH--hemoprotein reductase] + H2O + H(+). It carries out the reaction (5Z,8Z,11Z,14Z,17Z)-eicosapentaenoate + reduced [NADPH--hemoprotein reductase] + O2 = (17R,18S)-epoxy-(5Z,8Z,11Z,14Z)-eicosatetraenoate + oxidized [NADPH--hemoprotein reductase] + H2O + H(+). The catalysed reaction is (4Z,7Z,10Z,13Z,16Z,19Z)-docosahexaenoate + reduced [NADPH--hemoprotein reductase] + O2 = (19S,20R)-epoxy-(4Z,7Z,10Z,13Z,16Z)-docosapentaenoate + oxidized [NADPH--hemoprotein reductase] + H2O + H(+). It catalyses the reaction (4Z,7Z,10Z,13Z,16Z,19Z)-docosahexaenoate + reduced [NADPH--hemoprotein reductase] + O2 = (19R,20S)-epoxy-(4Z,7Z,10Z,13Z,16Z)-docosapentaenoate + oxidized [NADPH--hemoprotein reductase] + H2O + H(+). The enzyme catalyses all-trans-retinol + reduced [NADPH--hemoprotein reductase] + O2 = all-trans-retinal + oxidized [NADPH--hemoprotein reductase] + 2 H2O + H(+). It carries out the reaction all-trans-retinal + reduced [NADPH--hemoprotein reductase] + O2 = all-trans-retinoate + oxidized [NADPH--hemoprotein reductase] + H2O + 2 H(+). The catalysed reaction is (13S)-hydroperoxy-(9Z,11E)-octadecadienoate = 13-oxo-(9Z,11E)-octadecadienoate + H2O. It catalyses the reaction (12S)-hydroperoxy-(5Z,8Z,10E,14Z)-eicosatetraenoate = 12-oxo-(5Z,8Z,10E,14Z)-eicosatetraenoate + H2O. The enzyme catalyses (15S)-hydroperoxy-(5Z,8Z,11Z,13E)-eicosatetraenoate = 15-oxo-(5Z,8Z,11Z,13E)-eicosatetraenoate + H2O. It carries out the reaction (5S)-hydroperoxy-(6E,8Z,11Z,14Z)-eicosatetraenoate = 5-oxo-(6E,8Z,11Z,14Z)-eicosatetraenoate + H2O. It functions in the pathway steroid hormone biosynthesis. The protein operates within lipid metabolism; fatty acid metabolism. It participates in cofactor metabolism; retinol metabolism. Functionally, a cytochrome P450 monooxygenase involved in the metabolism of various endogenous substrates, including fatty acids, steroid hormones and vitamins. Mechanistically, uses molecular oxygen inserting one oxygen atom into a substrate, and reducing the second into a water molecule, with two electrons provided by NADPH via cytochrome P450 reductase (CPR; NADPH-ferrihemoprotein reductase). Catalyzes the hydroxylation of carbon-hydrogen bonds. Exhibits high catalytic activity for the formation of hydroxyestrogens from estrone (E1) and 17beta-estradiol (E2), namely 2-hydroxy E1 and E2, as well as D-ring hydroxylated E1 and E2 at the C15alpha and C16alpha positions. Displays different regioselectivities for polyunsaturated fatty acids (PUFA) hydroxylation. Catalyzes the epoxidation of double bonds of certain PUFA. Converts arachidonic acid toward epoxyeicosatrienoic acid (EET) regioisomers, 8,9-, 11,12-, and 14,15-EET, that function as lipid mediators in the vascular system. Displays an absolute stereoselectivity in the epoxidation of eicosapentaenoic acid (EPA) producing the 17(R),18(S) enantiomer. May play an important role in all-trans retinoic acid biosynthesis in extrahepatic tissues. Catalyzes two successive oxidative transformation of all-trans retinol to all-trans retinal and then to the active form all-trans retinoic acid. May also participate in eicosanoids metabolism by converting hydroperoxide species into oxo metabolites (lipoxygenase-like reaction, NADPH-independent). This chain is Cytochrome P450 1A1, found in Rattus norvegicus (Rat).